The primary structure comprises 199 residues: Thioredoxin reductase-like selenoprotein T (199 aa).

The first 24 residues, 1–24 (MRAAGLGLGIGLLLLAALAGPGGS), serve as a signal peptide directing secretion. A cross-link (cysteinyl-selenocysteine (Cys-Sec)) is located at residues 50–53 (CVSU). Sec53 is a non-standard amino acid (selenocysteine). A helical membrane pass occupies residues 95-115 (VFKLVLIGLIIVGKDPFAFFG).

It belongs to the SelWTH family. Selenoprotein T subfamily. In terms of processing, may contain a selenide-sulfide bond between Cys-50 and Sec-53. This bond is speculated to serve as redox-active pair.

It is found in the endoplasmic reticulum membrane. It catalyses the reaction [thioredoxin]-dithiol + NADP(+) = [thioredoxin]-disulfide + NADPH + H(+). Selenoprotein with thioredoxin reductase-like oxidoreductase activity. The polypeptide is Thioredoxin reductase-like selenoprotein T (Gallus gallus (Chicken)).